Consider the following 576-residue polypeptide: 4-alpha-glucanotransferase DPE1, chloroplastic/amyloplastic (576 aa).

Residues 1-45 constitute a chloroplast transit peptide; it reads MSILLRPSSSPSLCSSLKLFRLSSPDSLIDAAVLRNRTKPSQSFR.

Belongs to the disproportionating enzyme family.

It is found in the plastid. The protein localises to the chloroplast. It localises to the amyloplast. It carries out the reaction Transfers a segment of a (1-&gt;4)-alpha-D-glucan to a new position in an acceptor, which may be glucose or a (1-&gt;4)-alpha-D-glucan.. Chloroplastic alpha-glucanotransferase involved in maltotriose metabolism. Probably uses maltotriose as substrate to transfer a maltosyl unit from one molecule to another, resulting in glucose and maltopentaose. The latter can then be further metabolized to maltose and maltotriose by beta-amylase. Required for normal starch degradation in leaves. In Arabidopsis thaliana (Mouse-ear cress), this protein is 4-alpha-glucanotransferase DPE1, chloroplastic/amyloplastic (DPE1).